Reading from the N-terminus, the 375-residue chain is uncharacterized protein (375 aa).

This sequence belongs to the mimivirus L17x/L18x family.

This is an uncharacterized protein from Acanthamoeba polyphaga mimivirus (APMV).